The following is a 225-amino-acid chain: NAD(P)H-quinone oxidoreductase subunit K, chloroplastic (225 aa).

The [4Fe-4S] cluster site is built by cysteine 43, cysteine 44, cysteine 108, and cysteine 139.

The protein belongs to the complex I 20 kDa subunit family. In terms of assembly, NDH is composed of at least 16 different subunits, 5 of which are encoded in the nucleus. [4Fe-4S] cluster serves as cofactor.

It localises to the plastid. The protein localises to the chloroplast thylakoid membrane. The catalysed reaction is a plastoquinone + NADH + (n+1) H(+)(in) = a plastoquinol + NAD(+) + n H(+)(out). The enzyme catalyses a plastoquinone + NADPH + (n+1) H(+)(in) = a plastoquinol + NADP(+) + n H(+)(out). In terms of biological role, NDH shuttles electrons from NAD(P)H:plastoquinone, via FMN and iron-sulfur (Fe-S) centers, to quinones in the photosynthetic chain and possibly in a chloroplast respiratory chain. The immediate electron acceptor for the enzyme in this species is believed to be plastoquinone. Couples the redox reaction to proton translocation, and thus conserves the redox energy in a proton gradient. The chain is NAD(P)H-quinone oxidoreductase subunit K, chloroplastic from Gossypium barbadense (Sea Island cotton).